The sequence spans 180 residues: Guanosine-3',5'-bis(diphosphate) 3'-pyrophosphohydrolase MESH1 (180 aa).

In terms of domain architecture, HD spans 33-128; the sequence is YINHPIGVAR…VKLADKLYNL (96 aa). Residues H36, H62, and D63 each coordinate Mn(2+). Residues E66 and D67 each act as nucleophile in the active site. Position 123 (D123) interacts with Mn(2+).

The protein belongs to the MESH1 family. The cofactor is Mn(2+).

The enzyme catalyses guanosine 3',5'-bis(diphosphate) + H2O = GDP + diphosphate + H(+). Functionally, ppGpp hydrolyzing enzyme involved in starvation response. The polypeptide is Guanosine-3',5'-bis(diphosphate) 3'-pyrophosphohydrolase MESH1 (hddc3) (Danio rerio (Zebrafish)).